A 294-amino-acid chain; its full sequence is ATP synthase gamma chain (294 aa).

It belongs to the ATPase gamma chain family. F-type ATPases have 2 components, CF(1) - the catalytic core - and CF(0) - the membrane proton channel. CF(1) has five subunits: alpha(3), beta(3), gamma(1), delta(1), epsilon(1). CF(0) has three main subunits: a, b and c.

It localises to the cell inner membrane. Its function is as follows. Produces ATP from ADP in the presence of a proton gradient across the membrane. The gamma chain is believed to be important in regulating ATPase activity and the flow of protons through the CF(0) complex. This is ATP synthase gamma chain from Nitratiruptor sp. (strain SB155-2).